The primary structure comprises 313 residues: MTQWQPASPTLWQGRDDSAEAANALRLFQTVTRSPTFSPEMYREKIALLGFACDEGVKRNQGRPGAAGAPDALRRALANLASHHGHDRLVDLGNIIAQAPDLEGAQQALRDAVRRCQQADMRTFVLGGGHETAFGHGAGLLDAFPHARVGIINLDAHLDLRRADHATSGTPFRQLAQLCDEQQREFHYACFGVSRAANTQALWDEAQQRGVTIVEDVDCDTAQAPLAQVIDSVDKIYLTIDLDVLPAWEMPAVSAPAALGVPLATVMRLVDAVCRSGKLQAVDMVEFNPRFDDDGNAARVAARLGWQIAHGWR.

Residues H130, D155, H157, D159, D241, and D243 each contribute to the Mn(2+) site.

This sequence belongs to the arginase family. Requires Mn(2+) as cofactor.

The enzyme catalyses N-formimidoyl-L-glutamate + H2O = formamide + L-glutamate. It functions in the pathway amino-acid degradation; L-histidine degradation into L-glutamate; L-glutamate from N-formimidoyl-L-glutamate (hydrolase route): step 1/1. Its function is as follows. Catalyzes the conversion of N-formimidoyl-L-glutamate to L-glutamate and formamide. This chain is Formimidoylglutamase, found in Citrobacter koseri (strain ATCC BAA-895 / CDC 4225-83 / SGSC4696).